The chain runs to 396 residues: S-adenosylmethionine synthase (396 aa).

An ATP-binding site is contributed by His14. Position 16 (Asp16) interacts with Mg(2+). Residue Glu42 coordinates K(+). The L-methionine site is built by Glu55 and Gln98. Residues 98–108 are flexible loop; that stretch reads QSPDIALGVNE. ATP contacts are provided by residues 174 to 176, 241 to 242, Asp250, 256 to 257, Ala273, and Lys277; these read DGK, RF, and RK. An L-methionine-binding site is contributed by Asp250. Position 281 (Lys281) interacts with L-methionine.

Belongs to the AdoMet synthase family. In terms of assembly, homotetramer; dimer of dimers. It depends on Mg(2+) as a cofactor. K(+) is required as a cofactor.

The protein resides in the cytoplasm. The catalysed reaction is L-methionine + ATP + H2O = S-adenosyl-L-methionine + phosphate + diphosphate. The protein operates within amino-acid biosynthesis; S-adenosyl-L-methionine biosynthesis; S-adenosyl-L-methionine from L-methionine: step 1/1. In terms of biological role, catalyzes the formation of S-adenosylmethionine (AdoMet) from methionine and ATP. The overall synthetic reaction is composed of two sequential steps, AdoMet formation and the subsequent tripolyphosphate hydrolysis which occurs prior to release of AdoMet from the enzyme. This is S-adenosylmethionine synthase from Fervidobacterium nodosum (strain ATCC 35602 / DSM 5306 / Rt17-B1).